A 423-amino-acid chain; its full sequence is Protein SOSEKI 5 (423 aa).

The disordered stretch occupies residues methionine 1 to isoleucine 33. Residues arginine 19–isoleucine 33 are compositionally biased toward basic and acidic residues. The segment at arginine 45 to aspartate 136 is DIX-like oligomerization domain. Disordered regions lie at residues serine 150–isoleucine 172 and serine 196–threonine 258. Over residues serine 196–glutamine 211 the composition is skewed to polar residues. 2 short sequence motifs (association to cell membranes) span residues alanine 233–serine 234 and cysteine 303–glycine 304. The segment at serine 379–glutamine 423 is disordered. The segment covering cysteine 406–alanine 415 has biased composition (basic residues).

This sequence belongs to the SOSEKI family. Homodimer. Forms long polymer filaments with other SOKs proteins polymers (e.g. SOK1, SOK2, SOK3 and SOK4) crucial for polar localization and biological activity. Binds to ANGUSTIFOLIA (AN). In terms of tissue distribution, expressed during embryogenesis and in roots.

It is found in the cell membrane. Functionally, SOSEKI proteins (SOK1-5) locally interpret global polarity cues and can influence cell division orientation to coordinate cell polarization relative to body axes. In Arabidopsis thaliana (Mouse-ear cress), this protein is Protein SOSEKI 5.